The chain runs to 509 residues: Cytochrome P450 4X1 (509 aa).

A helical transmembrane segment spans residues 14–34; that stretch reads FYLAFVFCLALGLLQAIKLYL. Cysteine 454 is a heme binding site.

This sequence belongs to the cytochrome P450 family. Heme serves as cofactor. Expressed in brain, heart, kidney and skin and, at lower levels, in skeletal muscle and liver. In the brain, high levels are detected in amygdala and lower levels in globus pallidus and cerebellum. In the heart, very high levels in aorta, but very low levels in other heart regions. Also expressed in breast, prostate and colon.

Its subcellular location is the endoplasmic reticulum membrane. It is found in the microsome membrane. It carries out the reaction N-(5Z,8Z,11Z,14Z-eicosatetraenoyl)-ethanolamine + reduced [NADPH--hemoprotein reductase] + O2 = N-(14,15-epoxy-5Z,8Z,11Z-eicosatrienoyl)-ethanolamine + oxidized [NADPH--hemoprotein reductase] + H2O + H(+). A cytochrome P450 monooxygenase that selectively catalyzes the epoxidation of the last double bond of the arachidonoyl moiety of anandamide, potentially modulating endocannabinoid signaling. Has no hydroxylase activity toward various fatty acids, steroids and prostaglandins. Mechanistically, uses molecular oxygen inserting one oxygen atom into a substrate, and reducing the second into a water molecule, with two electrons provided by NADPH via cytochrome P450 reductase (CPR; NADPH-ferrihemoprotein reductase). This is Cytochrome P450 4X1 from Homo sapiens (Human).